The chain runs to 149 residues: Calmodulin-2 (149 aa).

Ala-2 carries the post-translational modification N-acetylalanine. 4 consecutive EF-hand domains span residues 8–43 (EQIAEFKEAFSLFDKDGNGNITTKELGTVMRSLGQN), 44–79 (PTEGELQDMINEVDADGNGTIDFPEFLTMMARKMKD), 81–116 (DSEEEIREAFKVFDKDGNGFISAAELRHVMTNPGEK), and 117–149 (LTDEEVDEMIREADIDGDGQVNYEEFVKMMTSK). Positions 21, 23, 25, 27, 32, 57, 59, 61, 63, 68, 94, 96, 98, and 105 each coordinate Ca(2+). Lys-116 is subject to N6,N6,N6-trimethyllysine. Residues Asp-130, Asp-132, Asp-134, Gln-136, and Glu-141 each coordinate Ca(2+).

Belongs to the calmodulin family.

In terms of biological role, calmodulin mediates the control of a large number of enzymes, ion channels and other proteins by Ca(2+). Among the enzymes to be stimulated by the calmodulin-Ca(2+) complex are a number of protein kinases and phosphatases. The protein is Calmodulin-2 (CAM2) of Branchiostoma floridae (Florida lancelet).